Reading from the N-terminus, the 426-residue chain is Elongation factor 1-alpha (426 aa).

One can recognise a tr-type G domain in the interval 5–221; sequence KPHMNLAVIG…DTFKEPDKPT (217 aa). A G1 region spans residues 14–21; that stretch reads GHIDHGKS. Residue 14–21 coordinates GTP; it reads GHIDHGKS. Serine 21 lines the Mg(2+) pocket. The segment at 70 to 74 is G2; it reads GITID. Positions 91–94 are G3; the sequence is DCPG. GTP-binding positions include 91 to 95 and 146 to 149; these read DCPGH and NKMD. The tract at residues 146–149 is G4; sequence NKMD. A G5 region spans residues 185-187; sequence SSF.

Belongs to the TRAFAC class translation factor GTPase superfamily. Classic translation factor GTPase family. EF-Tu/EF-1A subfamily.

The protein localises to the cytoplasm. It catalyses the reaction GTP + H2O = GDP + phosphate + H(+). In terms of biological role, GTP hydrolase that promotes the GTP-dependent binding of aminoacyl-tRNA to the A-site of ribosomes during protein biosynthesis. The sequence is that of Elongation factor 1-alpha from Methanosphaerula palustris (strain ATCC BAA-1556 / DSM 19958 / E1-9c).